The following is a 471-amino-acid chain: MKQSTIALALLPLLFTPVTKARTPEMPVLENRAAQGDITAPGGARRLTGDQTAALRDSLSDKPAKNIILLIGDGMGDSEITAARNYAEGAGGFFKGIDALPLTGQYTHYALNKKTGKPDYVTDSAASATAWSTGVKTYNGALGVDIHEKDHPTILEMAKAAGLATGNVSTAELQDATPAALVAHVTSRKCYGPSATSEKCPGNALEKGGKGSITEQLLNARADVTLGGGAKTFAETATAGEWQGKTLREQAQARGYQLVSDAASLNSVTEANQQKPLLGLFADGNMPVRWLGPKATYHGNIDKPAVTCTPNPQRNDSVPTLAQMTDKAIELLSKNEKGFFLQVEGASIDKQDHAANPCGQIGETVDLDEAVQRALEFAKKEGNTLVIVTADHAHASQIVAPDTKAPGLTQALNTKDGAVMVMSYGNSEEDSQEHTGSQLRIAAYGPHAANVVGLTDQTDLFYTMKAALGLK.

An N-terminal signal peptide occupies residues 1-21 (MKQSTIALALLPLLFTPVTKA). Aspartate 73 is a binding site for Mg(2+). Aspartate 73 contributes to the Zn(2+) binding site. Catalysis depends on serine 124, which acts as the Phosphoserine intermediate. Mg(2+)-binding residues include aspartate 175 and threonine 177. Intrachain disulfides connect cysteine 190–cysteine 200 and cysteine 308–cysteine 358. Glutamate 344 contacts Mg(2+). Residues aspartate 349, histidine 353, aspartate 391, histidine 392, and histidine 434 each contribute to the Zn(2+) site.

Belongs to the alkaline phosphatase family. As to quaternary structure, isozymes 1 and 3 are a dimer of identical chains, isozyme 2 is a dimer of heterogeneous chains, one of each of the subunits from isozymes 1 and 3. Requires Mg(2+) as cofactor. Zn(2+) serves as cofactor.

Its subcellular location is the periplasm. It carries out the reaction a phosphate monoester + H2O = an alcohol + phosphate. The chain is Alkaline phosphatase (phoA) from Escherichia coli (strain K12).